An 807-amino-acid polypeptide reads, in one-letter code: Glycerol-3-phosphate acyltransferase (807 aa).

The HXXXXD motif signature appears at 308–313 (CHRSHM).

The protein belongs to the GPAT/DAPAT family.

The protein resides in the cell inner membrane. The enzyme catalyses sn-glycerol 3-phosphate + an acyl-CoA = a 1-acyl-sn-glycero-3-phosphate + CoA. Its pathway is phospholipid metabolism; CDP-diacylglycerol biosynthesis; CDP-diacylglycerol from sn-glycerol 3-phosphate: step 1/3. In Shewanella baltica (strain OS195), this protein is Glycerol-3-phosphate acyltransferase.